The primary structure comprises 130 residues: Fumarate reductase subunit C (130 aa).

3 helical membrane-spanning segments follow: residues 30–50 (EGTSIPAVWFSVLLIYGVFSL), 60–80 (FVSFLQNPLVLFLNILTLFAA), and 110–130 (IKALWVVTVVASAIILAVALL).

This sequence belongs to the FrdC family. Part of an enzyme complex containing four subunits: a flavoprotein (FrdA), an iron-sulfur protein (FrdB), and two hydrophobic anchor proteins (FrdC and FrdD).

It is found in the cell inner membrane. Functionally, two distinct, membrane-bound, FAD-containing enzymes are responsible for the catalysis of fumarate and succinate interconversion; fumarate reductase is used in anaerobic growth, and succinate dehydrogenase is used in aerobic growth. Anchors the catalytic components of the fumarate reductase complex to the cell inner membrane, binds quinones. This Yersinia pestis bv. Antiqua (strain Angola) protein is Fumarate reductase subunit C.